We begin with the raw amino-acid sequence, 143 residues long: Peptide methionine sulfoxide reductase MsrB (143 aa).

Residues 16-139 (DAELRRRLTP…NSAALNFEAK (124 aa)) form the MsrB domain. Zn(2+) is bound by residues Cys55, Cys58, Cys104, and Cys107. Cys128 serves as the catalytic Nucleophile.

This sequence belongs to the MsrB Met sulfoxide reductase family. Zn(2+) serves as cofactor.

It catalyses the reaction L-methionyl-[protein] + [thioredoxin]-disulfide + H2O = L-methionyl-(R)-S-oxide-[protein] + [thioredoxin]-dithiol. The polypeptide is Peptide methionine sulfoxide reductase MsrB (Burkholderia pseudomallei (strain 1710b)).